Consider the following 97-residue polypeptide: SAGA-associated factor 11 (97 aa).

The SGF11-type zinc finger occupies 70–91 (IECNVCGREVSGNRFAAHLVRC).

This sequence belongs to the SGF11 family. In terms of assembly, component of the 1.8 MDa SAGA transcription coactivator-HAT complex. SAGA is built of 5 distinct domains with specialized functions. Within the SAGA complex, SUS1, SGF11, SGF73 and UBP8 form an additional subcomplex of SAGA called the DUB module (deubiquitination module). Interacts directly with SGF73, SUS1 and UBP8.

The protein resides in the nucleus. Functionally, functions as a component of the transcription regulatory histone acetylation (HAT) complex SAGA. At the promoters, SAGA is required for recruitment of the basal transcription machinery. It influences RNA polymerase II transcriptional activity through different activities such as TBP interaction and promoter selectivity, interaction with transcription activators, and chromatin modification through histone acetylation and deubiquitination. SAGA acetylates nucleosomal histone H3 to some extent (to form H3K9ac, H3K14ac, H3K18ac and H3K23ac). SAGA interacts with DNA via upstream activating sequences (UASs). Involved in transcriptional regulation of a subset of SAGA-regulated genes. Within the SAGA complex, participates in a subcomplex, that specifically deubiquitinates histones H2B. This is SAGA-associated factor 11 from Kluyveromyces lactis (strain ATCC 8585 / CBS 2359 / DSM 70799 / NBRC 1267 / NRRL Y-1140 / WM37) (Yeast).